The primary structure comprises 637 residues: 1-deoxy-D-xylulose-5-phosphate synthase (637 aa).

Residues His-82 and Gly-123 to Ala-125 contribute to the thiamine diphosphate site. Asp-154 provides a ligand contact to Mg(2+). Thiamine diphosphate is bound by residues Gly-155 to Ser-156, Asn-183, Tyr-295, and Glu-378. A Mg(2+)-binding site is contributed by Asn-183.

It belongs to the transketolase family. DXPS subfamily. Homodimer. Mg(2+) is required as a cofactor. Requires thiamine diphosphate as cofactor.

It catalyses the reaction D-glyceraldehyde 3-phosphate + pyruvate + H(+) = 1-deoxy-D-xylulose 5-phosphate + CO2. The protein operates within metabolic intermediate biosynthesis; 1-deoxy-D-xylulose 5-phosphate biosynthesis; 1-deoxy-D-xylulose 5-phosphate from D-glyceraldehyde 3-phosphate and pyruvate: step 1/1. In terms of biological role, catalyzes the acyloin condensation reaction between C atoms 2 and 3 of pyruvate and glyceraldehyde 3-phosphate to yield 1-deoxy-D-xylulose-5-phosphate (DXP). This chain is 1-deoxy-D-xylulose-5-phosphate synthase, found in Lawsonia intracellularis (strain PHE/MN1-00).